The following is a 72-amino-acid chain: Translation initiation factor IF-1 1 (72 aa).

In terms of domain architecture, S1-like spans 1-72; it reads MAKEDRIEMQ…SRARIIFRAK (72 aa).

It belongs to the IF-1 family. Component of the 30S ribosomal translation pre-initiation complex which assembles on the 30S ribosome in the order IF-2 and IF-3, IF-1 and N-formylmethionyl-tRNA(fMet); mRNA recruitment can occur at any time during PIC assembly.

The protein localises to the cytoplasm. In terms of biological role, one of the essential components for the initiation of protein synthesis. Stabilizes the binding of IF-2 and IF-3 on the 30S subunit to which N-formylmethionyl-tRNA(fMet) subsequently binds. Helps modulate mRNA selection, yielding the 30S pre-initiation complex (PIC). Upon addition of the 50S ribosomal subunit IF-1, IF-2 and IF-3 are released leaving the mature 70S translation initiation complex. The chain is Translation initiation factor IF-1 1 from Methylobacillus flagellatus (strain ATCC 51484 / DSM 6875 / VKM B-1610 / KT).